A 102-amino-acid chain; its full sequence is Large ribosomal subunit protein bL21 (102 aa).

The protein belongs to the bacterial ribosomal protein bL21 family. In terms of assembly, part of the 50S ribosomal subunit. Contacts protein L20.

In terms of biological role, this protein binds to 23S rRNA in the presence of protein L20. This chain is Large ribosomal subunit protein bL21, found in Desulfovibrio desulfuricans (strain ATCC 27774 / DSM 6949 / MB).